Reading from the N-terminus, the 448-residue chain is Exodeoxyribonuclease 7 large subunit (448 aa).

This sequence belongs to the XseA family. In terms of assembly, heterooligomer composed of large and small subunits.

It localises to the cytoplasm. The enzyme catalyses Exonucleolytic cleavage in either 5'- to 3'- or 3'- to 5'-direction to yield nucleoside 5'-phosphates.. In terms of biological role, bidirectionally degrades single-stranded DNA into large acid-insoluble oligonucleotides, which are then degraded further into small acid-soluble oligonucleotides. The protein is Exodeoxyribonuclease 7 large subunit of Shewanella sp. (strain MR-4).